The chain runs to 243 residues: Mitochondrial import inner membrane translocase subunit TIM17-2 (243 aa).

Transmembrane regions (helical) follow at residues 19–36, 66–83, 90–109, and 115–137; these read IGGAFGMGAVGGSAFHFI, FAVWGGLFSTFDCTMVYL, WNSIIAGAATGGFLSMRQGA, and SAIFGGVLLALIEGAGIMLNKVL. 10 repeat units span residues 149-151, 152-154, 155-157, 158-160, 161-163, 164-166, 167-169, 170-172, 173-175, and 176-178. The interval 149–178 is 10 X approximate repeats GMQ/P; the sequence is GMQGMPGMQGMQGMPGMPGMQGMPGMQGMQ. The segment covering 166 to 183 has biased composition (low complexity); the sequence is PGMQGMPGMQGMQMGQMQ. The segment at 166–243 is disordered; it reads PGMQGMPGMQ…APPVPSFEFK (78 aa). A compositionally biased stretch (polar residues) spans 184–198; the sequence is SQAQIRSESQNQNTA. Residues 211-228 show a composition bias toward basic and acidic residues; the sequence is FDKKKEEVQPGSESKTEV.

It belongs to the Tim17/Tim22/Tim23 family. In terms of assembly, component of the TIM17:23 complex at least composed of TIM23, TIM17 and TIM50. The complex interacts with the TIM44 component of the PAM complex. Interacts with TIM23-2. Expressed in roots, flowers, leaves and young cotyledons.

Its subcellular location is the mitochondrion inner membrane. The protein localises to the mitochondrion outer membrane. Its function is as follows. Essential component of the TIM17:23 complex, a complex that mediates the translocation of transit peptide-containing proteins across the mitochondrial inner membrane. Links the inner and outer membranes. The polypeptide is Mitochondrial import inner membrane translocase subunit TIM17-2 (TIM17-2) (Arabidopsis thaliana (Mouse-ear cress)).